The following is a 440-amino-acid chain: Diaminopimelate decarboxylase (440 aa).

K61 carries the post-translational modification N6-(pyridoxal phosphate)lysine. Pyridoxal 5'-phosphate-binding positions include G234 and 275–278 (EPGR). The substrate site is built by R278, R314, and Y318. The active-site Proton donor is C348. 2 residues coordinate substrate: E349 and Y384. Position 384 (Y384) interacts with pyridoxal 5'-phosphate. Low complexity predominate over residues 421–431 (LAPELEPGPAL). The interval 421 to 440 (LAPELEPGPALSPRPSRDPR) is disordered.

This sequence belongs to the Orn/Lys/Arg decarboxylase class-II family. LysA subfamily. As to quaternary structure, homodimer. The cofactor is pyridoxal 5'-phosphate.

It carries out the reaction meso-2,6-diaminopimelate + H(+) = L-lysine + CO2. It functions in the pathway amino-acid biosynthesis; L-lysine biosynthesis via DAP pathway; L-lysine from DL-2,6-diaminopimelate: step 1/1. Its function is as follows. Specifically catalyzes the decarboxylation of meso-diaminopimelate (meso-DAP) to L-lysine. The sequence is that of Diaminopimelate decarboxylase from Streptomyces coelicolor (strain ATCC BAA-471 / A3(2) / M145).